The primary structure comprises 349 residues: 4-hydroxy-tetrahydrodipicolinate reductase 2, chloroplastic (349 aa).

The transit peptide at 1–53 directs the protein to the chloroplast; the sequence is MAANGLMAASSVFLHRPVHPHFSFSSRTNQMVPLGFKGRVSFIGNVKRCFPVV. NAD(+) contacts are provided by residues 81 to 86, 173 to 175, and 196 to 199; these read GCSGKM, GTT, and SPQM. Residue His232 is the Proton donor/acceptor of the active site. The active-site Proton donor is Lys236. Position 241-242 (241-242) interacts with (S)-2,3,4,5-tetrahydrodipicolinate; the sequence is GT.

It belongs to the DapB family.

The protein localises to the plastid. It localises to the chloroplast. It catalyses the reaction (S)-2,3,4,5-tetrahydrodipicolinate + NAD(+) + H2O = (2S,4S)-4-hydroxy-2,3,4,5-tetrahydrodipicolinate + NADH + H(+). The catalysed reaction is (S)-2,3,4,5-tetrahydrodipicolinate + NADP(+) + H2O = (2S,4S)-4-hydroxy-2,3,4,5-tetrahydrodipicolinate + NADPH + H(+). It participates in amino-acid biosynthesis; L-lysine biosynthesis via DAP pathway; (S)-tetrahydrodipicolinate from L-aspartate: step 4/4. In terms of biological role, catalyzes the conversion of 4-hydroxy-tetrahydrodipicolinate (HTPA) to tetrahydrodipicolinate. This Arabidopsis thaliana (Mouse-ear cress) protein is 4-hydroxy-tetrahydrodipicolinate reductase 2, chloroplastic (DAPB2).